The following is a 414-amino-acid chain: WD repeat-containing protein jip5 (414 aa).

5 WD repeats span residues 9-48, 73-112, 118-159, 222-263, and 319-356; these read PLSADLFSQALHPKEPIVSVGLSTGHVQTFRLPSEESDTD, RHKGSCRCLGFGVDGEMLYSAGTDGLVKAAKAETGVVENK, AKDG…SPVS, VSSV…DQDE, and DETEGVIGLGFDVEGRMVSGGGQVVKVWHEAVDSDGMD. Residues 39-65 form a disordered region; it reads RLPSEESDTDGDGAESTSSSRNGKGHI. Positions 352-414 are disordered; that stretch reads SDGMDGDMAG…QDIMGFADID (63 aa). Acidic residues predominate over residues 369-383; the sequence is DSDDSDDGDDSDDSD.

This sequence belongs to the WD repeat WDR55 family.

It localises to the nucleus. The protein localises to the nucleolus. The chain is WD repeat-containing protein jip5 (jip5) from Neosartorya fischeri (strain ATCC 1020 / DSM 3700 / CBS 544.65 / FGSC A1164 / JCM 1740 / NRRL 181 / WB 181) (Aspergillus fischerianus).